The following is a 437-amino-acid chain: D-aminoacyl-tRNA deacylase (437 aa).

Belongs to the DtdA deacylase family. Monomer. Zn(2+) is required as a cofactor.

It catalyses the reaction a D-aminoacyl-tRNA + H2O = a tRNA + a D-alpha-amino acid + H(+). The enzyme catalyses glycyl-tRNA(Ala) + H2O = tRNA(Ala) + glycine + H(+). D-aminoacyl-tRNA deacylase with broad substrate specificity. By recycling D-aminoacyl-tRNA to D-amino acids and free tRNA molecules, this enzyme counteracts the toxicity associated with the formation of D-aminoacyl-tRNA entities in vivo. The sequence is that of D-aminoacyl-tRNA deacylase from Methanoculleus marisnigri (strain ATCC 35101 / DSM 1498 / JR1).